Reading from the N-terminus, the 762-residue chain is Proline-rich receptor-like protein kinase PERK10 (762 aa).

The disordered stretch occupies residues 1–322 (MTTPAQAPRE…PTPVTDNSSS (322 aa)). Residues 1–328 (MTTPAQAPRE…NSSSSGISIA (328 aa)) are Extracellular-facing. Residues 13-23 (SLSPSLASPPL) are compositionally biased toward low complexity. A glycan (N-linked (GlcNAc...) asparagine) is linked at asparagine 37. Low complexity predominate over residues 41–57 (PTREPTNGNPPETTNTP). Composition is skewed to pro residues over residues 60-210 (SSPP…PSTP), 231-246 (PPPP…PPSP), and 254-275 (HPSP…PDPL). A compositionally biased stretch (low complexity) spans 276-305 (PSNSSSPPTLLPPSSVVSPPSPPRKSVSGP). N-linked (GlcNAc...) asparagine glycans are attached at residues asparagine 278 and asparagine 319. The chain crosses the membrane as a helical span at residues 329–349 (AVVGVSIGVALVLLTLIGVVV). The Cytoplasmic segment spans residues 350 to 762 (CCLKKRKKRL…NSYISKDENL (413 aa)). Residues 370–410 (TPMESSSPRSDSALLKTQSSAPLVGNRSSNRTYLSQSEPGG) form a disordered region. The span at 372-407 (MESSSPRSDSALLKTQSSAPLVGNRSSNRTYLSQSE) shows a compositional bias: polar residues. The 277-residue stretch at 430–706 (FSDENLLGEG…SQIVRAFDSL (277 aa)) folds into the Protein kinase domain. Residues 436–444 (LGEGGFGRV) and lysine 458 each bind ATP. Aspartate 554 functions as the Proton acceptor in the catalytic mechanism.

This sequence belongs to the protein kinase superfamily. Ser/Thr protein kinase family. As to quaternary structure, interacts with KIPK1 and KIPK2 (via its cytosolic domain). As to expression, mostly expressed in inflorescence bolts and flower buds, and, to a lower extent, in roots, seedlings, leaves and siliques.

Its subcellular location is the cell membrane. It catalyses the reaction L-seryl-[protein] + ATP = O-phospho-L-seryl-[protein] + ADP + H(+). The catalysed reaction is L-threonyl-[protein] + ATP = O-phospho-L-threonyl-[protein] + ADP + H(+). In terms of biological role, could be involved in the negative regulation of root growth. The polypeptide is Proline-rich receptor-like protein kinase PERK10 (PERK10) (Arabidopsis thaliana (Mouse-ear cress)).